A 430-amino-acid chain; its full sequence is Maintenance of mitochondrial morphology protein 1 (430 aa).

Residues 1–82 (MTEIDPNINE…ISNTWNFTQG (82 aa)) lie on the Lumenal side of the membrane. The helical transmembrane segment at 83 to 103 (LVVGQLSVIFLIIIFVKFFVF) threads the bilayer. The Cytoplasmic portion of the chain corresponds to 104–430 (ADSSSSIPSK…AKPKDSDDTL (327 aa)). 2 stretches are compositionally biased toward basic and acidic residues: residues 126–138 (RDNK…DRHN) and 335–346 (ENGKGSSSEDKK). Disordered regions lie at residues 126-154 (RDNK…TDDE) and 315-346 (QADQ…EDKK). The SMP-LTD domain occupies 178–408 (ASESLDWFNV…EPRFQVVKLP (231 aa)).

The protein belongs to the MMM1 family. Homodimer. Component of the ER-mitochondria encounter structure (ERMES) or MDM complex, composed of MMM1, MDM10, MDM12 and MDM34. An MMM1 homodimer associates with one molecule of MDM12 on each side in a pairwise head-to-tail manner, and the SMP-LTD domains of MMM1 and MDM12 generate a continuous hydrophobic tunnel for phospholipid trafficking.

The protein resides in the endoplasmic reticulum membrane. In terms of biological role, component of the ERMES/MDM complex, which serves as a molecular tether to connect the endoplasmic reticulum (ER) and mitochondria. Components of this complex are involved in the control of mitochondrial shape and protein biogenesis, and function in nonvesicular lipid trafficking between the ER and mitochondria. The MDM12-MMM1 subcomplex functions in the major beta-barrel assembly pathway that is responsible for biogenesis of all outer membrane beta-barrel proteins, and acts in a late step after the SAM complex. The MDM10-MDM12-MMM1 subcomplex further acts in the TOM40-specific pathway after the action of the MDM12-MMM1 complex. Essential for establishing and maintaining the structure of mitochondria and maintenance of mtDNA nucleoids. This Lodderomyces elongisporus (strain ATCC 11503 / CBS 2605 / JCM 1781 / NBRC 1676 / NRRL YB-4239) (Yeast) protein is Maintenance of mitochondrial morphology protein 1.